The chain runs to 1747 residues: E3 ubiquitin-protein ligase listerin (1747 aa).

The segment at 1–24 is disordered; the sequence is MGGKTKQAPRTKNNAKPSSSSRTA. Residues 8 to 24 show a composition bias toward polar residues; that stretch reads APRTKNNAKPSSSSRTA. 5 HEAT repeats span residues 65–102, 106–144, 346–383, 424–461, and 508–547; these read AAIS…QSDV, KNIL…KCKK, NIRK…KVTQ, NAYF…NVLE, and KFWI…ANPS. Residue serine 566 is modified to Phosphoserine. HEAT repeat units follow at residues 612–653, 664–711, 789–825, 952–989, 1005–1042, 1053–1090, 1129–1166, 1216–1258, 1269–1307, 1330–1363, 1364–1400, and 1500–1539; these read SRYI…LLGQ, EIVF…CAEA, SFIA…EHRP, LSRN…DPED, KWNE…ELVL, GNSS…FCPQ, KLSQ…NFEG, VEFI…SIAQ, VAVY…LFAK, FQAC…NSNI, TLDH…HFVA, and ENFL…QKDR. The RING-type zinc finger occupies 1697-1744; it reads CYVCYTVIHQETCQLPKLTCKTCKKKFHGPCLYKWFTTSSKSTCPICR.

The protein belongs to the LTN1 family. In terms of assembly, component of the ribosome quality control complex (RQC), composed of at least the E3 ubiquitin ligase l(3)76BDr/LTN1 and Clbn/NEMF. The complex probably also contains TCF25 as well as TER94/VCP and its ubiquitin-binding cofactors. RQC forms a stable complex with 60S ribosomal subunits.

Its subcellular location is the cytoplasm. It localises to the cytosol. The catalysed reaction is S-ubiquitinyl-[E2 ubiquitin-conjugating enzyme]-L-cysteine + [acceptor protein]-L-lysine = [E2 ubiquitin-conjugating enzyme]-L-cysteine + N(6)-ubiquitinyl-[acceptor protein]-L-lysine.. It functions in the pathway protein modification; protein ubiquitination. E3 ubiquitin-protein ligase component of the ribosome quality control complex (RQC), a ribosome-associated complex that mediates ubiquitination and extraction of incompletely synthesized nascent chains for proteasomal degradation. Ubiquitination leads to TER94/VCP recruitment for extraction and degradation of the incomplete translation product. The sequence is that of E3 ubiquitin-protein ligase listerin from Drosophila melanogaster (Fruit fly).